A 361-amino-acid polypeptide reads, in one-letter code: Mannose-1-phosphate guanyltransferase 2 (361 aa).

The protein belongs to the transferase hexapeptide repeat family.

It is found in the cytoplasm. It carries out the reaction alpha-D-mannose 1-phosphate + GTP + H(+) = GDP-alpha-D-mannose + diphosphate. Its pathway is nucleotide-sugar biosynthesis; GDP-alpha-D-mannose biosynthesis; GDP-alpha-D-mannose from alpha-D-mannose 1-phosphate (GTP route): step 1/1. Its function is as follows. Involved in cell wall synthesis where it is required for glycosylation. Involved in cell cycle progression through cell-size checkpoint. In Candida glabrata (strain ATCC 2001 / BCRC 20586 / JCM 3761 / NBRC 0622 / NRRL Y-65 / CBS 138) (Yeast), this protein is Mannose-1-phosphate guanyltransferase 2 (MPG1).